We begin with the raw amino-acid sequence, 407 residues long: Tyrosine--tRNA ligase (407 aa).

Tyr-35 is an L-tyrosine binding site. Positions 40-49 (PTADSLHVGH) match the 'HIGH' region motif. Residues Tyr-168 and Gln-172 each coordinate L-tyrosine. The 'KMSKS' region signature appears at 228 to 232 (KMGKT). ATP is bound at residue Lys-231. Positions 341-405 (NSLVDLLAKC…RGKKNFNRIV (65 aa)) constitute an S4 RNA-binding domain.

Belongs to the class-I aminoacyl-tRNA synthetase family. TyrS type 1 subfamily. Homodimer.

Its subcellular location is the cytoplasm. The enzyme catalyses tRNA(Tyr) + L-tyrosine + ATP = L-tyrosyl-tRNA(Tyr) + AMP + diphosphate + H(+). Its function is as follows. Catalyzes the attachment of tyrosine to tRNA(Tyr) in a two-step reaction: tyrosine is first activated by ATP to form Tyr-AMP and then transferred to the acceptor end of tRNA(Tyr). The sequence is that of Tyrosine--tRNA ligase from Clostridium botulinum (strain Loch Maree / Type A3).